The following is a 469-amino-acid chain: MIPVSGFEGRTVAVFGLARTGLAAARALVAGGAKVALWDDKPAAREAAQAEGFELTDLTRADWREFAAVMLSPGVPLTHPAPHWTVERAREAGAEIVGDIELFARTVNAAPEHKRPKIVAITGTNGKSTTTALIGHICAEAGRDVRIGGNIGYGVLGLEDMHGGAVYVLELSSYQLDLTSSLHADVTVILNISPDHLERHGTMDEYVAAKRRILLNQGKGDTAVIGVDDPWGQRICTEITAANRRTIVPVSASKAMSRGVYALDGLLYDATGERAQEVADLKRARSLPGRHNWQNAAAAYAAARGLGISGEEAAQHLMTFPGLAHRMETVAVLGKVRFVNDSKATNADAARQAMSSYPKFYWIAGGLPKTGGIDGLIDLFPRIEKAYLVGEAAPAFADVLRGKAPAVESGTIEAAVRQAYADARAAGQEAIVLLSPACASFDQFADFEERGEAFRAAVQKLADGQADAA.

Residue G123–T129 coordinates ATP.

This sequence belongs to the MurCDEF family.

The protein localises to the cytoplasm. The catalysed reaction is UDP-N-acetyl-alpha-D-muramoyl-L-alanine + D-glutamate + ATP = UDP-N-acetyl-alpha-D-muramoyl-L-alanyl-D-glutamate + ADP + phosphate + H(+). Its pathway is cell wall biogenesis; peptidoglycan biosynthesis. Functionally, cell wall formation. Catalyzes the addition of glutamate to the nucleotide precursor UDP-N-acetylmuramoyl-L-alanine (UMA). In Phenylobacterium zucineum (strain HLK1), this protein is UDP-N-acetylmuramoylalanine--D-glutamate ligase.